A 701-amino-acid chain; its full sequence is Polyribonucleotide nucleotidyltransferase (701 aa).

Asp-485 and Asp-491 together coordinate Mg(2+). In terms of domain architecture, KH spans Pro-552–Ile-611. The region spanning Gly-621–Lys-689 is the S1 motif domain.

It belongs to the polyribonucleotide nucleotidyltransferase family. The cofactor is Mg(2+).

It is found in the cytoplasm. It catalyses the reaction RNA(n+1) + phosphate = RNA(n) + a ribonucleoside 5'-diphosphate. Functionally, involved in mRNA degradation. Catalyzes the phosphorolysis of single-stranded polyribonucleotides processively in the 3'- to 5'-direction. The protein is Polyribonucleotide nucleotidyltransferase of Caldicellulosiruptor bescii (strain ATCC BAA-1888 / DSM 6725 / KCTC 15123 / Z-1320) (Anaerocellum thermophilum).